The sequence spans 168 residues: 2-C-methyl-D-erythritol 2,4-cyclodiphosphate synthase (168 aa).

Residues aspartate 8 and histidine 10 each contribute to the a divalent metal cation site. 4-CDP-2-C-methyl-D-erythritol 2-phosphate-binding positions include 8–10 and 34–35; these read DLH and HS. Histidine 42 lines the a divalent metal cation pocket. Residues 56–58, 61–65, 132–135, and arginine 142 contribute to the 4-CDP-2-C-methyl-D-erythritol 2-phosphate site; these read DIG, FPDTD, and TTTE.

Belongs to the IspF family. In terms of assembly, homotrimer. Requires a divalent metal cation as cofactor.

The catalysed reaction is 4-CDP-2-C-methyl-D-erythritol 2-phosphate = 2-C-methyl-D-erythritol 2,4-cyclic diphosphate + CMP. The protein operates within isoprenoid biosynthesis; isopentenyl diphosphate biosynthesis via DXP pathway; isopentenyl diphosphate from 1-deoxy-D-xylulose 5-phosphate: step 4/6. Its function is as follows. Involved in the biosynthesis of isopentenyl diphosphate (IPP) and dimethylallyl diphosphate (DMAPP), two major building blocks of isoprenoid compounds. Catalyzes the conversion of 4-diphosphocytidyl-2-C-methyl-D-erythritol 2-phosphate (CDP-ME2P) to 2-C-methyl-D-erythritol 2,4-cyclodiphosphate (ME-CPP) with a corresponding release of cytidine 5-monophosphate (CMP). The polypeptide is 2-C-methyl-D-erythritol 2,4-cyclodiphosphate synthase (Desulfosudis oleivorans (strain DSM 6200 / JCM 39069 / Hxd3) (Desulfococcus oleovorans)).